The following is a 919-amino-acid chain: Glutamate receptor ionotropic, kainate 3 (919 aa).

The first 31 residues, 1–31 (MTAPWRRLRSLVWEYWAGLLVCAFWIPDSRG), serve as a signal peptide directing secretion. Over 32 to 563 (MPHVIRIGGI…VFSFLNPLSP (532 aa)) the chain is Extracellular. Residues asparagine 70, asparagine 76, asparagine 278, asparagine 381, asparagine 415, asparagine 426, and asparagine 433 are each glycosylated (N-linked (GlcNAc...) asparagine). Cysteine 99 and cysteine 350 form a disulfide bridge. L-glutamate is bound by residues proline 518, threonine 520, and arginine 525. Residues asparagine 548 and asparagine 551 are each glycosylated (N-linked (GlcNAc...) asparagine). A helical transmembrane segment spans residues 564-584 (DIWMYVLLAYLGVSCVLFVIA). At 585–636 (RFSPYEWYDAHPCNPGSEVVENNFTLLNSFWFGMGSLMQQGSELMPKALSTR) the chain is on the cytoplasmic side. Residues 637–657 (IIGGIWWFFTLIIISSYTANL) form a helical membrane-spanning segment. Residues 658–820 (AAFLTVERME…KEASALGIQK (163 aa)) lie on the Extracellular side of the membrane. L-glutamate contacts are provided by alanine 691, threonine 692, and glutamate 739. Asparagine 752 carries N-linked (GlcNAc...) asparagine glycosylation. A helical membrane pass occupies residues 821-841 (IGGIFIVLAAGLVLSVLVAVG). The Cytoplasmic portion of the chain corresponds to 842 to 919 (EFVYKLRKTA…CSTSLAPVFP (78 aa)). A Phosphoserine modification is found at serine 869. A Glycyl lysine isopeptide (Lys-Gly) (interchain with G-Cter in SUMO1) cross-link involves residue lysine 887.

This sequence belongs to the glutamate-gated ion channel (TC 1.A.10.1) family. GRIK3 subfamily. In terms of assembly, homotetramer, and heterotetramer with either GRIK4 or GRIK5. Can form functional heteromeric receptors with GRIK2. Interacts with PRKCABP. Interacts with NETO2.

It localises to the cell membrane. Its subcellular location is the postsynaptic cell membrane. The enzyme catalyses Ca(2+)(in) = Ca(2+)(out). Its function is as follows. Ionotropic glutamate receptor that functions as a cation-permeable ligand-gated ion channel, gated by L-glutamate and the glutamatergic agonist kainic acid. Binding of the excitatory neurotransmitter L-glutamate induces a conformation change, leading to the opening of the cation channel, and thereby converts the chemical signal to an electrical impulse. The receptor then desensitizes rapidly and enters a transient inactive state, characterized by the presence of bound agonist. In association with GRIK2, involved in presynaptic facilitation of glutamate release at hippocampal mossy fiber synapses. This Macaca fascicularis (Crab-eating macaque) protein is Glutamate receptor ionotropic, kainate 3 (GRIK3).